The sequence spans 241 residues: Large ribosomal subunit protein uL3 (241 aa).

Gln-157 is subject to N5-methylglutamine.

This sequence belongs to the universal ribosomal protein uL3 family. As to quaternary structure, part of the 50S ribosomal subunit. Forms a cluster with proteins L14 and L19. In terms of processing, methylated by PrmB.

In terms of biological role, one of the primary rRNA binding proteins, it binds directly near the 3'-end of the 23S rRNA, where it nucleates assembly of the 50S subunit. This chain is Large ribosomal subunit protein uL3, found in Vesicomyosocius okutanii subsp. Calyptogena okutanii (strain HA).